The sequence spans 740 residues: Phosphoribosylformylglycinamidine synthase subunit PurL (740 aa).

H50 is an active-site residue. The ATP site is built by Y53 and K92. Position 94 (E94) interacts with Mg(2+). Substrate-binding positions include 95–98 and R117; that span reads SHNH. H96 (proton acceptor) is an active-site residue. A Mg(2+)-binding site is contributed by D118. Substrate is bound at residue Q241. D269 contacts Mg(2+). Residue 313 to 315 coordinates substrate; it reads ESQ. Residues D495 and G532 each coordinate ATP. N533 is a binding site for Mg(2+). A substrate-binding site is contributed by S535.

It belongs to the FGAMS family. In terms of assembly, monomer. Part of the FGAM synthase complex composed of 1 PurL, 1 PurQ and 2 PurS subunits.

It is found in the cytoplasm. The catalysed reaction is N(2)-formyl-N(1)-(5-phospho-beta-D-ribosyl)glycinamide + L-glutamine + ATP + H2O = 2-formamido-N(1)-(5-O-phospho-beta-D-ribosyl)acetamidine + L-glutamate + ADP + phosphate + H(+). It functions in the pathway purine metabolism; IMP biosynthesis via de novo pathway; 5-amino-1-(5-phospho-D-ribosyl)imidazole from N(2)-formyl-N(1)-(5-phospho-D-ribosyl)glycinamide: step 1/2. In terms of biological role, part of the phosphoribosylformylglycinamidine synthase complex involved in the purines biosynthetic pathway. Catalyzes the ATP-dependent conversion of formylglycinamide ribonucleotide (FGAR) and glutamine to yield formylglycinamidine ribonucleotide (FGAM) and glutamate. The FGAM synthase complex is composed of three subunits. PurQ produces an ammonia molecule by converting glutamine to glutamate. PurL transfers the ammonia molecule to FGAR to form FGAM in an ATP-dependent manner. PurS interacts with PurQ and PurL and is thought to assist in the transfer of the ammonia molecule from PurQ to PurL. This Brucella canis (strain ATCC 23365 / NCTC 10854 / RM-666) protein is Phosphoribosylformylglycinamidine synthase subunit PurL.